The following is a 309-amino-acid chain: Methionyl-tRNA formyltransferase (309 aa).

109 to 112 provides a ligand contact to (6S)-5,6,7,8-tetrahydrofolate; it reads SLLP.

This sequence belongs to the Fmt family.

The catalysed reaction is L-methionyl-tRNA(fMet) + (6R)-10-formyltetrahydrofolate = N-formyl-L-methionyl-tRNA(fMet) + (6S)-5,6,7,8-tetrahydrofolate + H(+). Its function is as follows. Attaches a formyl group to the free amino group of methionyl-tRNA(fMet). The formyl group appears to play a dual role in the initiator identity of N-formylmethionyl-tRNA by promoting its recognition by IF2 and preventing the misappropriation of this tRNA by the elongation apparatus. The sequence is that of Methionyl-tRNA formyltransferase from Clostridium novyi (strain NT).